The sequence spans 334 residues: Sucrose operon repressor (334 aa).

Residues 6–63 (VTIKDIAELAGVSKATASLVLNGRGKELRVAQETRERVLAIAREQHYQPSIHARSLRD) enclose the HTH lacI-type domain. The segment at residues 8–27 (IKDIAELAGVSKATASLVLN) is a DNA-binding region (H-T-H motif).

Its function is as follows. Repressor for the scr operon. Binds D-fructose as an inducer. This chain is Sucrose operon repressor (scrR), found in Klebsiella pneumoniae.